The sequence spans 184 residues: Photosystem I assembly protein Ycf4 (184 aa).

A run of 2 helical transmembrane segments spans residues 21-41 and 63-83; these read YFWA…GLSS and IIMT…WLTI.

It belongs to the Ycf4 family.

It localises to the plastid. The protein resides in the chloroplast thylakoid membrane. Seems to be required for the assembly of the photosystem I complex. The polypeptide is Photosystem I assembly protein Ycf4 (Gracilaria tenuistipitata var. liui (Red alga)).